The chain runs to 451 residues: MPKNKKRNTPHRGSSAGGGGSGAAAATAATAGGQHRNVQPFSDEDASIETMSHCSGYSDPSSFAEDGPEVLDEEGTQEDLEYKLKGLIDLTLDKSAKTRQAALEGIKNALASKMLYEFILERRMTLTDSIERCLKKGKSDEQRAAAALASVLCIQLGPGIESEEILKTLGPILKKIICDGSASMQARQTCATCFGVCCFIATDDITELYSTLECLENIFTKSYLKEKDTTVICSTPNTVLHISSLLAWTLLLTICPINEVKKKLEMHFHKLPSLLSCDDVNMRIAAGESLALLFELARGIESDFFYEDMESLTQMLRALATDGNKHRAKVDKRKQRSVFRDVLRAVEERDFPTETIKFGPERMYIDCWVKKHTYDTFKEVLGSGMQYHLQSNEFLRNVFELGPPVMLDAATLKTMKISRFERHLYNSAAFKARTKARSKCRDKRADVGEFF.

The span at 1 to 10 shows a compositional bias: basic residues; it reads MPKNKKRNTP. The interval 1–69 is disordered; sequence MPKNKKRNTP…PSSFAEDGPE (69 aa). The span at 23–33 shows a compositional bias: low complexity; the sequence is AAAATAATAGG. Positions 49–61 are enriched in polar residues; sequence ETMSHCSGYSDPS.

Belongs to the IFRD family. Interacts with PSIP1/LEDGF. Expressed in a variety of tissues.

In terms of biological role, could play a role in regulating gene activity in the proliferative and/or differentiative pathways induced by NGF. May be an autocrine factor that attenuates or amplifies the initial ligand-induced signal. The protein is Interferon-related developmental regulator 1 (IFRD1) of Homo sapiens (Human).